Reading from the N-terminus, the 311-residue chain is Dermonecrotic toxin (311 aa).

The N-terminal stretch at 1 to 21 (MYVHLALILGCWTVVLQGAET) is a signal peptide. Residues 22–26 (DVGER) constitute a propeptide that is removed on maturation. His-38 is a catalytic residue. Mg(2+) is bound by residues Glu-58 and Asp-60. Residue His-73 is the Nucleophile of the active site. Cys-77 and Cys-83 are joined by a disulfide. Position 117 (Asp-117) interacts with Mg(2+).

The protein belongs to the arthropod phospholipase D family. Class I subfamily. Requires Mg(2+) as cofactor. As to expression, expressed by the venom gland.

The protein localises to the secreted. The catalysed reaction is an N-(acyl)-sphingosylphosphocholine = an N-(acyl)-sphingosyl-1,3-cyclic phosphate + choline. The enzyme catalyses an N-(acyl)-sphingosylphosphoethanolamine = an N-(acyl)-sphingosyl-1,3-cyclic phosphate + ethanolamine. It carries out the reaction a 1-acyl-sn-glycero-3-phosphocholine = a 1-acyl-sn-glycero-2,3-cyclic phosphate + choline. It catalyses the reaction a 1-acyl-sn-glycero-3-phosphoethanolamine = a 1-acyl-sn-glycero-2,3-cyclic phosphate + ethanolamine. With respect to regulation, catalytic activity and hemolysis are inhibited by divalent ion chelators (1,10-phenanthroline, EDTA, and EGTA). Dermonecrotic toxins cleave the phosphodiester linkage between the phosphate and headgroup of certain phospholipids (sphingolipid and lysolipid substrates), forming an alcohol (often choline) and a cyclic phosphate. This toxin acts on sphingomyelin (SM). It may also act on ceramide phosphoethanolamine (CPE), lysophosphatidylcholine (LPC) and lysophosphatidylethanolamine (LPE), but not on lysophosphatidylserine (LPS), and lysophosphatidylglycerol (LPG). It acts by transphosphatidylation, releasing exclusively cyclic phosphate products as second products. Shows complement-dependent hemolysis. Also induces dermonecrosis, vascular permeability, edema, inflammatory response, and platelet aggregation. This is Dermonecrotic toxin from Loxosceles laeta (South American recluse spider).